The following is a 444-amino-acid chain: Phosphoglucosamine mutase (444 aa).

The Phosphoserine intermediate role is filled by serine 104. Mg(2+) contacts are provided by serine 104, aspartate 243, aspartate 245, and aspartate 247. Serine 104 carries the post-translational modification Phosphoserine.

It belongs to the phosphohexose mutase family. It depends on Mg(2+) as a cofactor. Activated by phosphorylation.

The catalysed reaction is alpha-D-glucosamine 1-phosphate = D-glucosamine 6-phosphate. In terms of biological role, catalyzes the conversion of glucosamine-6-phosphate to glucosamine-1-phosphate. The chain is Phosphoglucosamine mutase from Neisseria gonorrhoeae (strain ATCC 700825 / FA 1090).